A 644-amino-acid chain; its full sequence is MERQRRFMSEKDEYQFQHQGAVELLVFNFLLILTILTIWLFKNHRFRFLHETGGAMVYGLIMGLILRYATAPTDIESGTVYDCGKLAFSPSTLLINITDQVYEYKYKREISQHNINPHLGNAILEKMTFDPEIFFNVLLPPIIFHAGYSLKKRHFFQNLGSILTYAFLGTAISCIVIGLIMYGFVKAMVYAGQLKNGDFHFTDCLFFGSLMSATDPVTVLAIFHELHVDPDLYTLLFGESVLNDAVAIVLTYSISIYSPKENPNAFDAAAFFQSVGNFLGIFAGSFAMGSAYAVVTALLTKFTKLCEFPMLETGLFFLLSWSAFLSAEAAGLTGIVAVLFCGVTQAHYTYNNLSLDSKMRTKQLFEFMNFLAENVIFCYMGLALFTFQNHIFNALFILGAFLAIFVARACNIYPLSFLLNLGRKHKIPWNFQHMMMFSGLRGAIAFALAIRDTESQPKQMMFSTTLLLVFFTVWVFGGGTTPMLTWLQIRVGVDLDEDLKERPSSHQEANNLEKSTTKTESAWLFRMWYGFDHKYLKPILTHSGPPLTTTLPEWCGPISRLLTSPQAYGEQLKEDDAECIVNQDELAMNYQEQAASPCSPPTRLGLDQKAAPQTPGKENIYEGDLGLGGYELKLEQTPGQSQLN.

Residues 1–20 (MERQRRFMSEKDEYQFQHQG) are Lumenal-facing. A helical membrane pass occupies residues 21-41 (AVELLVFNFLLILTILTIWLF). Over 42 to 45 (KNHR) the chain is Cytoplasmic. Residues 46–66 (FRFLHETGGAMVYGLIMGLIL) form a helical membrane-spanning segment. Residues 67–126 (RYATAPTDIESGTVYDCGKLAFSPSTLLINITDQVYEYKYKREISQHNINPHLGNAILEK) are Lumenal-facing. Residues 127–147 (MTFDPEIFFNVLLPPIIFHAG) traverse the membrane as a helical segment. Residues 148–164 (YSLKKRHFFQNLGSILT) lie on the Cytoplasmic side of the membrane. The helical transmembrane segment at 165-185 (YAFLGTAISCIVIGLIMYGFV) threads the bilayer. At 186–203 (KAMVYAGQLKNGDFHFTD) the chain is on the lumenal side. A helical transmembrane segment spans residues 204–224 (CLFFGSLMSATDPVTVLAIFH). The Cytoplasmic segment spans residues 225-235 (ELHVDPDLYTL). Residues 236-256 (LFGESVLNDAVAIVLTYSISI) traverse the membrane as a helical segment. The Lumenal portion of the chain corresponds to 257 to 277 (YSPKENPNAFDAAAFFQSVGN). The chain crosses the membrane as a helical span at residues 278–298 (FLGIFAGSFAMGSAYAVVTAL). The Cytoplasmic segment spans residues 299–301 (LTK). A run of 2 helical transmembrane segments spans residues 302–322 (FTKLCEFPMLETGLFFLLSWS) and 323–343 (AFLSAEAAGLTGIVAVLFCGV). Topologically, residues 344–364 (TQAHYTYNNLSLDSKMRTKQL) are cytoplasmic. A helical membrane pass occupies residues 365–385 (FEFMNFLAENVIFCYMGLALF). Residue Thr386 is a topological domain, lumenal. The helical transmembrane segment at 387–407 (FQNHIFNALFILGAFLAIFVA) threads the bilayer. Residues 408–429 (RACNIYPLSFLLNLGRKHKIPW) are Cytoplasmic-facing. Residues 430 to 450 (NFQHMMMFSGLRGAIAFALAI) form a helical membrane-spanning segment. The Lumenal segment spans residues 451–465 (RDTESQPKQMMFSTT). The helical transmembrane segment at 466–486 (LLLVFFTVWVFGGGTTPMLTW) threads the bilayer. The Cytoplasmic segment spans residues 487–644 (LQIRVGVDLD…EQTPGQSQLN (158 aa)). Residues 593-622 (QAASPCSPPTRLGLDQKAAPQTPGKENIYE) are disordered.

The protein belongs to the monovalent cation:proton antiporter 1 (CPA1) transporter (TC 2.A.36) family. As to quaternary structure, homodimer; phosphatidylinositol-4,5-bisphosphate (PIP2) and phosphatidylinositol 3,4,5-trisphosphate (PIP3) could be involved in the dimer stabilization. Interacts (via the C-terminus) with RACK1. Interacts with CHP1.

It localises to the late endosome membrane. Its subcellular location is the early endosome membrane. The protein resides in the recycling endosome membrane. It is found in the cell membrane. The protein localises to the cytoplasmic vesicle. It localises to the phagosome membrane. The catalysed reaction is Na(+)(in) + H(+)(out) = Na(+)(out) + H(+)(in). The enzyme catalyses K(+)(in) + H(+)(out) = K(+)(out) + H(+)(in). Its function is as follows. Endosomal Na(+), K(+)/H(+) antiporter. Mediates the electroneutral exchange of endosomal luminal H(+) for a cytosolic Na(+) or K(+). By facilitating proton efflux, SLC9A9 counteracts the acidity generated by vacuolar (V)-ATPase, thereby limiting luminal acidification. Regulates organellar pH and consequently, endosome maturation and endocytic trafficking of plasma membrane receptors and neurotransporters. Promotes the recycling of transferrin receptors back to the cell surface to facilitate additional iron uptake in the brain. Regulates synaptic transmission by regulating the luminal pH of axonal endosomes. Regulates phagosome lumenal pH, thus affecting phagosome maturation, and consequently, microbicidal activity in macrophages. Can also be active at the cell surface of specialized cells, e.g., in the inner ear hair bundles uses the high K(+) of the endolymph to regulate intracelular pH. The protein is Sodium/hydrogen exchanger 9 (SLC9A9) of Equus caballus (Horse).